Reading from the N-terminus, the 455-residue chain is Bifunctional protein GlmU (455 aa).

Residues 1-227 are pyrophosphorylase; that stretch reads MGLSVIILAA…CEEVQGVNDR (227 aa). UDP-N-acetyl-alpha-D-glucosamine contacts are provided by residues 8 to 11, Lys-22, Gln-73, 78 to 79, 100 to 102, Gly-137, Glu-152, Asn-167, and Asn-225; these read LAAG, GT, and YGD. A Mg(2+)-binding site is contributed by Asp-102. Asn-225 contributes to the Mg(2+) binding site. Residues 228–248 are linker; sequence WELTKLERYYQRLMAKKLSLA. An N-acetyltransferase region spans residues 249 to 455; that stretch reads GVTIIDPERF…KGWHRPTKKE (207 aa). The UDP-N-acetyl-alpha-D-glucosamine site is built by Arg-332 and Lys-350. Catalysis depends on His-362, which acts as the Proton acceptor. UDP-N-acetyl-alpha-D-glucosamine-binding residues include Tyr-365 and Asn-376. Acetyl-CoA is bound by residues Ala-379, 385–386, Ser-404, Ala-422, and Arg-439; that span reads NY.

It in the N-terminal section; belongs to the N-acetylglucosamine-1-phosphate uridyltransferase family. In the C-terminal section; belongs to the transferase hexapeptide repeat family. Homotrimer. It depends on Mg(2+) as a cofactor.

Its subcellular location is the cytoplasm. The enzyme catalyses alpha-D-glucosamine 1-phosphate + acetyl-CoA = N-acetyl-alpha-D-glucosamine 1-phosphate + CoA + H(+). It carries out the reaction N-acetyl-alpha-D-glucosamine 1-phosphate + UTP + H(+) = UDP-N-acetyl-alpha-D-glucosamine + diphosphate. It functions in the pathway nucleotide-sugar biosynthesis; UDP-N-acetyl-alpha-D-glucosamine biosynthesis; N-acetyl-alpha-D-glucosamine 1-phosphate from alpha-D-glucosamine 6-phosphate (route II): step 2/2. The protein operates within nucleotide-sugar biosynthesis; UDP-N-acetyl-alpha-D-glucosamine biosynthesis; UDP-N-acetyl-alpha-D-glucosamine from N-acetyl-alpha-D-glucosamine 1-phosphate: step 1/1. It participates in bacterial outer membrane biogenesis; LPS lipid A biosynthesis. In terms of biological role, catalyzes the last two sequential reactions in the de novo biosynthetic pathway for UDP-N-acetylglucosamine (UDP-GlcNAc). The C-terminal domain catalyzes the transfer of acetyl group from acetyl coenzyme A to glucosamine-1-phosphate (GlcN-1-P) to produce N-acetylglucosamine-1-phosphate (GlcNAc-1-P), which is converted into UDP-GlcNAc by the transfer of uridine 5-monophosphate (from uridine 5-triphosphate), a reaction catalyzed by the N-terminal domain. The protein is Bifunctional protein GlmU of Coxiella burnetii (strain CbuG_Q212) (Coxiella burnetii (strain Q212)).